We begin with the raw amino-acid sequence, 174 residues long: Negative modulator of initiation of replication (174 aa).

This sequence belongs to the SeqA family. Homodimer. Polymerizes to form helical filaments.

The protein localises to the cytoplasm. Its function is as follows. Negative regulator of replication initiation, which contributes to regulation of DNA replication and ensures that replication initiation occurs exactly once per chromosome per cell cycle. Binds to pairs of hemimethylated GATC sequences in the oriC region, thus preventing assembly of replication proteins and re-initiation at newly replicated origins. Repression is relieved when the region becomes fully methylated. The chain is Negative modulator of initiation of replication from Pseudoalteromonas atlantica (strain T6c / ATCC BAA-1087).